Consider the following 298-residue polypeptide: ADP/ATP translocase 3 (298 aa).

Methionine 1 bears the N-acetylmethionine mark. Over 1 to 7 (MTEQAIS) the chain is Mitochondrial intermembrane. The residue at position 2 (threonine 2) is an N-acetylthreonine; in ADP/ATP translocase 3, N-terminally processed. The stretch at 6–98 (ISFAKDFLAG…FAFKDKYKQI (93 aa)) is one Solcar 1 repeat. A helical membrane pass occupies residues 8 to 37 (FAKDFLAGGIAAAISKTAVAPIERVKLLLQ). Residues 38-74 (VQHASKQIAADKQYKGIVDCIVRIPKEQGVLSFWRGN) are Mitochondrial matrix-facing. Lysine 52 is modified (N6,N6,N6-trimethyllysine). A helical membrane pass occupies residues 75 to 99 (LANVIRYFPTQALNFAFKDKYKQIF). Residues arginine 80 and lysine 92 each coordinate ADP. At 100-109 (LGGVDKHTQF) the chain is on the mitochondrial intermembrane side. Lysine 105 carries the post-translational modification N6-acetyllysine. Residues 110-130 (WRYFAGNLASGGAAGATSLCF) traverse the membrane as a helical segment. Solcar repeat units follow at residues 111–201 (RYFA…AKGM) and 212–297 (VSWM…LKKV). Residues 131 to 178 (VYPLDFARTRLAADVGKSGTEREFRGLGDCLVKITKSDGIRGLYQGFS) lie on the Mitochondrial matrix side of the membrane. Residues 179–199 (VSVQGIIIYRAAYFGVYDTAK) form a helical membrane-spanning segment. Residues 200-210 (GMLPDPKNTHI) lie on the Mitochondrial intermembrane side of the membrane. The helical transmembrane segment at 211–231 (VVSWMIAQTVTAVAGVVSYPF) threads the bilayer. Residues 232-273 (DTVRRRMMMQSGRKGADIMYTGTVDCWRKIFRDEGGKAFFKG) lie on the Mitochondrial matrix side of the membrane. Arginine 235 provides a ligand contact to ADP. Residues 235-240 (RRRMMM) are important for transport activity. Residues 235 to 240 (RRRMMM) carry the Nucleotide carrier signature motif motif. The residue at position 268 (lysine 268) is an N6-acetyllysine. Residues 274–291 (AWSNVLRGMGGAFVLVLY) form a helical membrane-spanning segment. Topologically, residues 292-298 (DELKKVI) are mitochondrial intermembrane.

This sequence belongs to the mitochondrial carrier (TC 2.A.29) family. Monomer. Found in a complex with ARL2, ARL2BP and SLC25A6/ANT3. In terms of assembly, (Microbial infection) Interacts with influenza A virus PB1-F2 protein. As to quaternary structure, (Microbial infection) Interacts with HIV-1 Vpr. Trimethylated by ANTKMT at Lys-52. Expressed in erythrocytes (at protein level).

The protein localises to the mitochondrion inner membrane. The protein resides in the membrane. It carries out the reaction ADP(in) + ATP(out) = ADP(out) + ATP(in). The catalysed reaction is H(+)(in) = H(+)(out). With respect to regulation, the matrix-open state (m-state) is inhibited by the membrane-permeable bongkrekic acid (BKA). The cytoplasmic-open state (c-state) is inhibited by the membrane-impermeable toxic inhibitor carboxyatractyloside (CATR). Proton transporter activity is inhibited by ADP:ATP antiporter activity. In terms of biological role, ADP:ATP antiporter that mediates import of ADP into the mitochondrial matrix for ATP synthesis, and export of ATP out to fuel the cell. Cycles between the cytoplasmic-open state (c-state) and the matrix-open state (m-state): operates by the alternating access mechanism with a single substrate-binding site intermittently exposed to either the cytosolic (c-state) or matrix (m-state) side of the inner mitochondrial membrane. In addition to its ADP:ATP antiporter activity, also involved in mitochondrial uncoupling and mitochondrial permeability transition pore (mPTP) activity. Plays a role in mitochondrial uncoupling by acting as a proton transporter: proton transport uncouples the proton flows via the electron transport chain and ATP synthase to reduce the efficiency of ATP production and cause mitochondrial thermogenesis. Proton transporter activity is inhibited by ADP:ATP antiporter activity, suggesting that SLC25A6/ANT3 acts as a master regulator of mitochondrial energy output by maintaining a delicate balance between ATP production (ADP:ATP antiporter activity) and thermogenesis (proton transporter activity). Proton transporter activity requires free fatty acids as cofactor, but does not transport it. Also plays a key role in mPTP opening, a non-specific pore that enables free passage of the mitochondrial membranes to solutes of up to 1.5 kDa, and which contributes to cell death. It is however unclear if SLC25A6/ANT3 constitutes a pore-forming component of mPTP or regulates it. The protein is ADP/ATP translocase 3 of Homo sapiens (Human).